The following is a 968-amino-acid chain: Translation initiation factor IF-2 (968 aa).

Residues 305–319 (KPAAAAGAPGAPGAA) are compositionally biased toward low complexity. The segment at 305–376 (KPAAAAGAPG…NDRDARPEST (72 aa)) is disordered. A tr-type G domain is found at 468-635 (PRAPVVTVMG…QVLLQAEVLE (168 aa)). The segment at 477–484 (GHVDHGKT) is G1. 477 to 484 (GHVDHGKT) serves as a coordination point for GTP. Residues 502–506 (GITQH) form a G2 region. Residues 523 to 526 (DTPG) form a G3 region. Residues 523–527 (DTPGH) and 577–580 (NKID) contribute to the GTP site. Positions 577 to 580 (NKID) are G4. The tract at residues 613-615 (SAR) is G5.

This sequence belongs to the TRAFAC class translation factor GTPase superfamily. Classic translation factor GTPase family. IF-2 subfamily.

The protein localises to the cytoplasm. In terms of biological role, one of the essential components for the initiation of protein synthesis. Protects formylmethionyl-tRNA from spontaneous hydrolysis and promotes its binding to the 30S ribosomal subunits. Also involved in the hydrolysis of GTP during the formation of the 70S ribosomal complex. In Polaromonas sp. (strain JS666 / ATCC BAA-500), this protein is Translation initiation factor IF-2.